The sequence spans 332 residues: Glycerol-3-phosphate dehydrogenase [NAD(P)+] (332 aa).

NADPH is bound by residues S11, F12, K32, and K106. K106, G137, and S139 together coordinate sn-glycerol 3-phosphate. Position 141 (A141) interacts with NADPH. Sn-glycerol 3-phosphate-binding residues include K192, D245, S255, R256, and N257. Residue K192 is the Proton acceptor of the active site. R256 is an NADPH binding site. Positions 280 and 282 each coordinate NADPH.

The protein belongs to the NAD-dependent glycerol-3-phosphate dehydrogenase family.

The protein resides in the cytoplasm. The enzyme catalyses sn-glycerol 3-phosphate + NAD(+) = dihydroxyacetone phosphate + NADH + H(+). The catalysed reaction is sn-glycerol 3-phosphate + NADP(+) = dihydroxyacetone phosphate + NADPH + H(+). Its pathway is membrane lipid metabolism; glycerophospholipid metabolism. Its function is as follows. Catalyzes the reduction of the glycolytic intermediate dihydroxyacetone phosphate (DHAP) to sn-glycerol 3-phosphate (G3P), the key precursor for phospholipid synthesis. The polypeptide is Glycerol-3-phosphate dehydrogenase [NAD(P)+] (Staphylococcus aureus (strain Mu3 / ATCC 700698)).